A 301-amino-acid polypeptide reads, in one-letter code: Ribonuclease HIII (301 aa).

The RNase H type-2 domain occupies 88 to 301 (WSVLGSDEVG…TQKARQLARQ (214 aa)). Positions 94, 95, and 197 each coordinate a divalent metal cation.

The protein belongs to the RNase HII family. RnhC subfamily. Requires Mn(2+) as cofactor. It depends on Mg(2+) as a cofactor.

It is found in the cytoplasm. The catalysed reaction is Endonucleolytic cleavage to 5'-phosphomonoester.. Its function is as follows. Endonuclease that specifically degrades the RNA of RNA-DNA hybrids. This chain is Ribonuclease HIII, found in Limosilactobacillus fermentum (strain NBRC 3956 / LMG 18251) (Lactobacillus fermentum).